The primary structure comprises 668 residues: L-type lectin-domain containing receptor kinase I.7 (668 aa).

The signal sequence occupies residues 1 to 21; sequence MIRGLLLGIIWMIFCVCSSFQ. At 22-285 the chain is on the extracellular side; that stretch reads QETPFVYNNF…SSTKKKSTSP (264 aa). Positions 24-256 are legume-lectin like; that stretch reads TPFVYNNFGH…YQYILGWSFS (233 aa). Residues asparagine 56, asparagine 125, asparagine 167, asparagine 201, and asparagine 223 are each glycosylated (N-linked (GlcNAc...) asparagine). The chain crosses the membrane as a helical span at residues 286-306; sequence VLSVLLGLIAFIVLGILVVAY. Residues 307-668 are Cytoplasmic-facing; the sequence is LYRRNLYSEV…THSVLYGSGR (362 aa). A Protein kinase domain is found at 341–620; sequence FNRSEFLGRG…LNGNLALPEF (280 aa). ATP contacts are provided by residues 347–355 and lysine 372; that span reads LGRGGFGEV. Aspartate 468 acts as the Proton acceptor in catalysis.

In the C-terminal section; belongs to the protein kinase superfamily. Ser/Thr protein kinase family. This sequence in the N-terminal section; belongs to the leguminous lectin family.

It is found in the cell membrane. It carries out the reaction L-seryl-[protein] + ATP = O-phospho-L-seryl-[protein] + ADP + H(+). The catalysed reaction is L-threonyl-[protein] + ATP = O-phospho-L-threonyl-[protein] + ADP + H(+). Its function is as follows. Involved in resistance response to the pathogenic oomycetes Phytophthora infestans and Phytophthora capsici. This Arabidopsis thaliana (Mouse-ear cress) protein is L-type lectin-domain containing receptor kinase I.7.